The chain runs to 211 residues: Neuroendocrine protein 7B2 (211 aa).

Positions 1–26 (MVSRMVSTMLSGLLFWLASGWTPAFA) are cleaved as a signal peptide. Residues 106–132 (DFSEDQGYPDPPNPCPVGKTDDGCLEN) form a disordered region. Cysteine 120 and cysteine 129 form a disulfide bridge. Phosphoserine is present on residues serine 140 and serine 204. Positions 173–211 (GGERRKRRSVNPYLQGQRLDNVVAKKSVPHFSDEDKDPE) are disordered.

The protein belongs to the 7B2 family. In terms of assembly, interacts with PCSK2/PC2 early in the secretory pathway. Dissociation occurs at later stages. Post-translationally, proteolytically cleaved in the Golgi by a furin-like convertase to generate bioactive peptides. In terms of processing, sulfated on tyrosine residues.

It localises to the secreted. Functionally, acts as a molecular chaperone for PCSK2/PC2, preventing its premature activation in the regulated secretory pathway. Binds to inactive PCSK2 in the endoplasmic reticulum and facilitates its transport from there to later compartments of the secretory pathway where it is proteolytically matured and activated. Also required for cleavage of PCSK2 but does not appear to be involved in its folding. Plays a role in regulating pituitary hormone secretion. The C-terminal peptide inhibits PCSK2 in vitro. The protein is Neuroendocrine protein 7B2 (SCG5) of Pan troglodytes (Chimpanzee).